Consider the following 111-residue polypeptide: 2Fe-2S ferredoxin (111 aa).

Residues 1–104 (MPKIFFLPHK…DIEVQIPLYN (104 aa)) enclose the 2Fe-2S ferredoxin-type domain. Cysteine 42, cysteine 48, cysteine 51, and cysteine 87 together coordinate [2Fe-2S] cluster.

Belongs to the adrenodoxin/putidaredoxin family. Requires [2Fe-2S] cluster as cofactor.

Ferredoxin are iron-sulfur proteins that transfer electrons in a wide variety of metabolic reactions. This chain is 2Fe-2S ferredoxin (fdx), found in Buchnera aphidicola subsp. Schizaphis graminum (strain Sg).